The primary structure comprises 249 residues: Cysteine desulfuration protein SufE (249 aa).

Cys154 serves as the catalytic Cysteine persulfide intermediate.

The protein belongs to the SufE family. Monomer. Interacts with SufS; interaction enhances cysteine desulfurase activity of SufS. In terms of processing, proteolytically cleaved.

The protein localises to the plastid. Its subcellular location is the apicoplast. It participates in cofactor biosynthesis; iron-sulfur cluster biosynthesis. Its function is as follows. Participates in sulfur mobilization (SUF) pathway for iron-sulfur (Fe-S) cluster biogenesis. Enhances cysteine desulfurase activity of SufS. Probably functions as a sulfur acceptor for SufS. The chain is Cysteine desulfuration protein SufE from Plasmodium falciparum (isolate 3D7).